The chain runs to 172 residues: Translation initiation factor IF-3 (172 aa).

Belongs to the IF-3 family. In terms of assembly, monomer.

The protein resides in the cytoplasm. In terms of biological role, IF-3 binds to the 30S ribosomal subunit and shifts the equilibrium between 70S ribosomes and their 50S and 30S subunits in favor of the free subunits, thus enhancing the availability of 30S subunits on which protein synthesis initiation begins. The protein is Translation initiation factor IF-3 of Geobacter sulfurreducens (strain ATCC 51573 / DSM 12127 / PCA).